The primary structure comprises 571 residues: S100P-binding protein (571 aa).

The segment covering 270–280 (SDIPFDGDIDE) has biased composition (acidic residues). Disordered regions lie at residues 270 to 312 (SDIP…LESV) and 356 to 385 (NGQN…CSQS). Residues 299–309 (TSESTPASSEL) are compositionally biased toward polar residues. The segment covering 365–378 (PLPPSDTAPGPQLP) has biased composition (pro residues).

It is found in the nucleus. The sequence is that of S100P-binding protein (s100pbp) from Xenopus tropicalis (Western clawed frog).